A 292-amino-acid chain; its full sequence is Elongation factor Ts (292 aa).

The involved in Mg(2+) ion dislocation from EF-Tu stretch occupies residues 79 to 82 (TDFV).

The protein belongs to the EF-Ts family.

It is found in the cytoplasm. Its function is as follows. Associates with the EF-Tu.GDP complex and induces the exchange of GDP to GTP. It remains bound to the aminoacyl-tRNA.EF-Tu.GTP complex up to the GTP hydrolysis stage on the ribosome. This is Elongation factor Ts from Mycoplasmoides gallisepticum (strain R(low / passage 15 / clone 2)) (Mycoplasma gallisepticum).